A 212-amino-acid chain; its full sequence is MTTSSRSRSSTVAAATLGEDDLSSNAQKERRKRILDATLALASKGGYEAVQMRAVAERADVAVGTLYRYFPSKVHLLVSALAREFERIDSRGKNPPGRNPLERMQLILSQITRAMQRDPLLTEAMTRAFMFADASAAAEVDQVGKLMDRLFARAMTDTEPTEDQLAVARVISDVWLSNLVAWLTRRSSATDVANRLELTVELLLGDGSRRPE.

Residues 1–11 (MTTSSRSRSST) show a composition bias toward low complexity. The disordered stretch occupies residues 1–28 (MTTSSRSRSSTVAAATLGEDDLSSNAQK). One can recognise an HTH tetR-type domain in the interval 28–88 (KERRKRILDA…SALAREFERI (61 aa)). A DNA-binding region (H-T-H motif) is located at residues 51 to 70 (QMRAVAERADVAVGTLYRYF).

In terms of assembly, homodimer.

Functionally, controls the expression of genes used for utilizing diverse lipids as energy sources. This Rhodococcus jostii (strain RHA1) protein is HTH-type transcriptional repressor KstR (kstR).